Here is a 578-residue protein sequence, read N- to C-terminus: Probable acyl-activating enzyme 12, peroxisomal (578 aa).

Residues 576–578 (SRL) carry the Microbody targeting signal motif.

The protein belongs to the ATP-dependent AMP-binding enzyme family. In terms of tissue distribution, expressed at low levels in leaves.

The protein resides in the peroxisome. Functionally, may act as an acid--thiol ligase that activates carboxylic acids by forming acyl-CoAs. In Arabidopsis thaliana (Mouse-ear cress), this protein is Probable acyl-activating enzyme 12, peroxisomal (AAE12).